A 78-amino-acid chain; its full sequence is D-alanyl carrier protein (78 aa).

The 78-residue stretch at 1–78 (MEFREQVLDL…KIVEVLEELR (78 aa)) folds into the Carrier domain. Ser36 is modified (O-(pantetheine 4'-phosphoryl)serine).

This sequence belongs to the DltC family. Post-translationally, 4'-phosphopantetheine is transferred from CoA to a specific serine of apo-DCP.

It localises to the cytoplasm. It participates in cell wall biogenesis; lipoteichoic acid biosynthesis. Its function is as follows. Carrier protein involved in the D-alanylation of lipoteichoic acid (LTA). The loading of thioester-linked D-alanine onto DltC is catalyzed by D-alanine--D-alanyl carrier protein ligase DltA. The DltC-carried D-alanyl group is further transferred to cell membrane phosphatidylglycerol (PG) by forming an ester bond, probably catalyzed by DltD. D-alanylation of LTA plays an important role in modulating the properties of the cell wall in Gram-positive bacteria, influencing the net charge of the cell wall. The protein is D-alanyl carrier protein of Staphylococcus xylosus.